Consider the following 557-residue polypeptide: Cytochrome P450 734A2 (557 aa).

A helical transmembrane segment spans residues 13-35; sequence WATWRVAAVAAAAAVWVTMHVAA. Cys-495 is a binding site for heme.

The protein belongs to the cytochrome P450 family. It depends on heme as a cofactor. As to expression, expressed in roots, shoot apex, leaf sheaths and leaf blades.

The protein localises to the membrane. Its function is as follows. Cytochrome P450 involved in brassinosteroids (BRs) inactivation and regulation of BRs homeostasis. Is a multifunctional and multisubstrate enzyme that controls the endogenous bioactive BR content both by direct inactivation of castasterone (CS) and by decreasing the levels of BR precursors. Catalyzes the oxidation of carbon 22 hydroxylated BR intermediates to produce C26 oxidized metabolites. This is Cytochrome P450 734A2 (CYP734A2) from Oryza sativa subsp. japonica (Rice).